We begin with the raw amino-acid sequence, 60 residues long: U-scutigerotoxin(02)-Tl4a (60 aa).

This sequence belongs to the scutigerotoxin-02 family. Post-translationally, contains 3 disulfide bonds. In terms of tissue distribution, expressed by the venom gland.

The protein localises to the secreted. This chain is U-scutigerotoxin(02)-Tl4a, found in Thereuopoda longicornis (Long-legged centipede).